The primary structure comprises 381 residues: Cytochrome b (381 aa).

4 helical membrane passes run F34–M54, W78–I99, W114–L134, and F179–L199. Residues H84 and H98 each coordinate heme b. 2 residues coordinate heme b: H183 and H197. An a ubiquinone-binding site is contributed by H202. The next 4 membrane-spanning stretches (helical) occupy residues Y227–M247, L289–H309, M321–G341, and F348–P368.

This sequence belongs to the cytochrome b family. The cytochrome bc1 complex contains 3 respiratory subunits (MT-CYB, CYC1 and UQCRFS1), 2 core proteins (UQCRC1 and UQCRC2) and probably 6 low-molecular weight proteins. Requires heme b as cofactor.

The protein resides in the mitochondrion inner membrane. Functionally, component of the ubiquinol-cytochrome c reductase complex (complex III or cytochrome b-c1 complex) that is part of the mitochondrial respiratory chain. The b-c1 complex mediates electron transfer from ubiquinol to cytochrome c. Contributes to the generation of a proton gradient across the mitochondrial membrane that is then used for ATP synthesis. This is Cytochrome b (mt-cyb) from Prionace glauca (Blue shark).